The sequence spans 471 residues: tRNA-2-methylthio-N(6)-dimethylallyladenosine synthase (471 aa).

Residues 29 to 146 (KKFHIKTYGC…LPELIAKVNR (118 aa)) enclose the MTTase N-terminal domain. [4Fe-4S] cluster is bound by residues Cys38, Cys74, Cys109, Cys187, Cys191, and Cys194. The 233-residue stretch at 173 to 405 (RVPQSSAFLS…QQLLKEKQLE (233 aa)) folds into the Radical SAM core domain. Residues 408-467 (KKMIGKTVTVLFDKKHPDKISGRTEYMQQVFSDDSNLLDKIVTMRVEDASTFTLKCTAED) enclose the TRAM domain.

This sequence belongs to the methylthiotransferase family. MiaB subfamily. In terms of assembly, monomer. Requires [4Fe-4S] cluster as cofactor.

The protein resides in the cytoplasm. It catalyses the reaction N(6)-dimethylallyladenosine(37) in tRNA + (sulfur carrier)-SH + AH2 + 2 S-adenosyl-L-methionine = 2-methylsulfanyl-N(6)-dimethylallyladenosine(37) in tRNA + (sulfur carrier)-H + 5'-deoxyadenosine + L-methionine + A + S-adenosyl-L-homocysteine + 2 H(+). In terms of biological role, catalyzes the methylthiolation of N6-(dimethylallyl)adenosine (i(6)A), leading to the formation of 2-methylthio-N6-(dimethylallyl)adenosine (ms(2)i(6)A) at position 37 in tRNAs that read codons beginning with uridine. This Neorickettsia sennetsu (strain ATCC VR-367 / Miyayama) (Ehrlichia sennetsu) protein is tRNA-2-methylthio-N(6)-dimethylallyladenosine synthase.